Here is a 385-residue protein sequence, read N- to C-terminus: Benzoate O-methyltransferase (385 aa).

Tyr-18 lines the S-adenosyl-L-homocysteine pocket. Benzoate is bound at residue Gln-25. Cys-59, Asn-64, Asp-106, Leu-107, Ser-145, and Tyr-146 together coordinate S-adenosyl-L-homocysteine. Trp-167 is a binding site for benzoate. Mg(2+)-binding residues include Asn-184, Glu-270, Phe-272, and Asn-273.

Belongs to the methyltransferase superfamily. Type-7 methyltransferase family. SABATH subfamily. Mg(2+) serves as cofactor.

The catalysed reaction is benzoate + S-adenosyl-L-methionine = methyl benzoate + S-adenosyl-L-homocysteine. Methyltransferase involved in the biosynthesis of methyl benzoate in response to stresses. Utilizes exclusively benzoic acid (BA) as substrate. This chain is Benzoate O-methyltransferase (OMT8), found in Zea mays (Maize).